The primary structure comprises 938 residues: Isoleucine--tRNA ligase (938 aa).

The short motif at 58 to 68 is the 'HIGH' region element; sequence PYANGSIHIGH. Glutamate 561 contacts L-isoleucyl-5'-AMP. The 'KMSKS' region motif lies at 602 to 606; sequence KMSKS. Lysine 605 is an ATP binding site. Zn(2+) is bound by residues cysteine 901, cysteine 904, cysteine 921, and cysteine 924.

It belongs to the class-I aminoacyl-tRNA synthetase family. IleS type 1 subfamily. As to quaternary structure, monomer. The cofactor is Zn(2+).

It localises to the cytoplasm. The enzyme catalyses tRNA(Ile) + L-isoleucine + ATP = L-isoleucyl-tRNA(Ile) + AMP + diphosphate. Catalyzes the attachment of isoleucine to tRNA(Ile). As IleRS can inadvertently accommodate and process structurally similar amino acids such as valine, to avoid such errors it has two additional distinct tRNA(Ile)-dependent editing activities. One activity is designated as 'pretransfer' editing and involves the hydrolysis of activated Val-AMP. The other activity is designated 'posttransfer' editing and involves deacylation of mischarged Val-tRNA(Ile). The chain is Isoleucine--tRNA ligase from Cronobacter sakazakii (strain ATCC BAA-894) (Enterobacter sakazakii).